Here is a 384-residue protein sequence, read N- to C-terminus: Anhydro-N-acetylmuramic acid kinase (384 aa).

Residue 9–16 coordinates ATP; that stretch reads GTSVDGID.

This sequence belongs to the anhydro-N-acetylmuramic acid kinase family.

The catalysed reaction is 1,6-anhydro-N-acetyl-beta-muramate + ATP + H2O = N-acetyl-D-muramate 6-phosphate + ADP + H(+). The protein operates within amino-sugar metabolism; 1,6-anhydro-N-acetylmuramate degradation. Its pathway is cell wall biogenesis; peptidoglycan recycling. Functionally, catalyzes the specific phosphorylation of 1,6-anhydro-N-acetylmuramic acid (anhMurNAc) with the simultaneous cleavage of the 1,6-anhydro ring, generating MurNAc-6-P. Is required for the utilization of anhMurNAc either imported from the medium or derived from its own cell wall murein, and thus plays a role in cell wall recycling. The protein is Anhydro-N-acetylmuramic acid kinase of Rippkaea orientalis (strain PCC 8801 / RF-1) (Cyanothece sp. (strain PCC 8801)).